The sequence spans 264 residues: Methionine aminopeptidase (264 aa).

H79 is a binding site for substrate. Residues D97, D108, and H171 each contribute to the a divalent metal cation site. Position 178 (H178) interacts with substrate. Residues E204 and E235 each coordinate a divalent metal cation.

The protein belongs to the peptidase M24A family. Methionine aminopeptidase type 1 subfamily. In terms of assembly, monomer. Co(2+) serves as cofactor. The cofactor is Zn(2+). Mn(2+) is required as a cofactor. It depends on Fe(2+) as a cofactor.

The catalysed reaction is Release of N-terminal amino acids, preferentially methionine, from peptides and arylamides.. Its function is as follows. Removes the N-terminal methionine from nascent proteins. The N-terminal methionine is often cleaved when the second residue in the primary sequence is small and uncharged (Met-Ala-, Cys, Gly, Pro, Ser, Thr, or Val). Requires deformylation of the N(alpha)-formylated initiator methionine before it can be hydrolyzed. The protein is Methionine aminopeptidase of Escherichia coli O157:H7.